A 1133-amino-acid chain; its full sequence is Probable cation-transporting ATPase 9 (1133 aa).

The Cytoplasmic portion of the chain corresponds to 1–6 (MRVSSI). A helical transmembrane segment spans residues 7–28 (EAEMENPIDVDKTDVEGELKIK). Residues 29-34 (QVTLLR) are Extracellular-facing. Residues 35–53 (ENIVKKIVFFLVAIFCSDR) form a helical membrane-spanning segment. Over 54–167 (PSVLKKVFYE…IEINVPSFLT (114 aa)) the chain is Cytoplasmic. The helical transmembrane segment at 168–190 (LMWREFKKPINFLLYFGIIVWGI) threads the bilayer. Over 191-193 (EQM) the chain is Extracellular. A helical membrane pass occupies residues 194–212 (YVSTAITVVFTTTINSLIC). Residues 213-363 (IYIRGVMQKL…PFNKKFQQQA (151 aa)) lie on the Cytoplasmic side of the membrane. Residues 364–383 (VKLTILMATLLLIGFLSTLS) form a helical membrane-spanning segment. Topologically, residues 384 to 396 (RLLDIELPPLFIA) are extracellular. The helical transmembrane segment at 397-418 (FRFLDILIYSAPPGMPMLIAIT) threads the bilayer. Over 419–887 (NFVGLKRLKN…NSVEIFKGYL (469 aa)) the chain is Cytoplasmic. Catalysis depends on Asp-451, which acts as the 4-aspartylphosphate intermediate. Mg(2+) is bound by residues Asp-827 and Asp-831. The chain crosses the membrane as a helical span at residues 888-906 (QVALLRYLGFLTLAYFYSS). The Extracellular portion of the chain corresponds to 907–915 (YSSGQMDWQ). The helical transmembrane segment at 916 to 931 (ALASGYFLVYLILGCN) threads the bilayer. Residues 932–948 (TPLKKLEKSVFDDNLFS) are Cytoplasmic-facing. A helical transmembrane segment spans residues 949-972 (IYNVTSVLFGFTLHILSIVGCVES). The Extracellular segment spans residues 973 to 994 (LHASPIYKEVNSLDAENNFQFE). Residues 995 to 1018 (TQHNTVLNFNILINFFYVIISNHI) form a helical membrane-spanning segment. Topologically, residues 1019–1030 (GKPMKDRYYKNT) are cytoplasmic. A helical transmembrane segment spans residues 1031–1050 (IAIYYDLGLIYTCKCMILQV). The Extracellular portion of the chain corresponds to 1051–1101 (LLILEHTHHGLIFLILLLDQEFSSSLTVQVYFSLPMNLFLPEEFSLNFTQE). A helical transmembrane segment spans residues 1102–1124 (VKKEKELLICNSSSTILEVDYNL). The Cytoplasmic portion of the chain corresponds to 1125–1133 (RLNYFQQNF).

This sequence belongs to the cation transport ATPase (P-type) (TC 3.A.3) family. Type V subfamily.

Its subcellular location is the membrane. The catalysed reaction is ATP + H2O = ADP + phosphate + H(+). The polypeptide is Probable cation-transporting ATPase 9 (TPA9) (Tetrahymena thermophila).